A 201-amino-acid chain; its full sequence is Ependymin-related protein 2 (201 aa).

The first 21 residues, 1-21, serve as a signal peptide directing secretion; sequence MILQVVLLLACLSGAIVSTGA. Residues N38 and N137 are each glycosylated (N-linked (GlcNAc...) asparagine). The Microbody targeting signal motif lies at 199 to 201; the sequence is CRA.

This sequence belongs to the ependymin family. In terms of tissue distribution, component of the acid-soluble and acid-insoluble organic matrix of calcified shell layers (at protein level).

The protein localises to the secreted. This Haliotis asinina (Donkey's ear abalone) protein is Ependymin-related protein 2.